The sequence spans 242 residues: Small ribosomal subunit protein eS1 (242 aa).

This sequence belongs to the eukaryotic ribosomal protein eS1 family. In terms of assembly, component of the small ribosomal subunit. Mature ribosomes consist of a small (40S) and a large (60S) subunit. The 40S subunit contains about 33 different proteins and 1 molecule of RNA (18S). The 60S subunit contains about 49 different proteins and 3 molecules of RNA (25S, 5.8S and 5S).

It localises to the cytoplasm. The polypeptide is Small ribosomal subunit protein eS1 (Lodderomyces elongisporus (strain ATCC 11503 / CBS 2605 / JCM 1781 / NBRC 1676 / NRRL YB-4239) (Yeast)).